Here is a 150-residue protein sequence, read N- to C-terminus: Ribonuclease H (150 aa).

The RNase H type-1 domain occupies 1–142; that stretch reads MSDSVELFTD…ADQLANRGVD (142 aa). Mg(2+) is bound by residues D10, E48, D70, and D134.

This sequence belongs to the RNase H family. As to quaternary structure, monomer. Requires Mg(2+) as cofactor.

It is found in the cytoplasm. It catalyses the reaction Endonucleolytic cleavage to 5'-phosphomonoester.. Its function is as follows. Endonuclease that specifically degrades the RNA of RNA-DNA hybrids. The sequence is that of Ribonuclease H from Pseudomonas syringae pv. syringae (strain B728a).